A 382-amino-acid polypeptide reads, in one-letter code: S-adenosylmethionine synthase (382 aa).

Glutamate 10 is a binding site for Mg(2+). Histidine 16 contacts ATP. Glutamate 44 is a binding site for K(+). L-methionine-binding residues include glutamate 57 and glutamine 100. ATP is bound by residues 166 to 168, 234 to 237, aspartate 245, 251 to 252, alanine 268, lysine 272, and lysine 276; these read DTK, SGRF, and RK. Aspartate 245 contacts L-methionine. Residue lysine 276 participates in L-methionine binding.

Belongs to the AdoMet synthase family. It depends on Mg(2+) as a cofactor. Requires K(+) as cofactor.

It catalyses the reaction L-methionine + ATP + H2O = S-adenosyl-L-methionine + phosphate + diphosphate. The protein operates within amino-acid biosynthesis; S-adenosyl-L-methionine biosynthesis; S-adenosyl-L-methionine from L-methionine: step 1/1. Its function is as follows. Catalyzes the formation of S-adenosylmethionine from methionine and ATP. The reaction comprises two steps that are both catalyzed by the same enzyme: formation of S-adenosylmethionine (AdoMet) and triphosphate, and subsequent hydrolysis of the triphosphate. The protein is S-adenosylmethionine synthase (sam1) of Schizosaccharomyces pombe (strain 972 / ATCC 24843) (Fission yeast).